The sequence spans 671 residues: Replication protein A 70 kDa DNA-binding subunit (671 aa).

Disordered stretches follow at residues 143–166 and 190–219; these read QVSQPKQMVTPPVSNINKPTPAVN and MNKTAPVKQNNNNNNNNNGNNKNNSSLQIS. The span at 199–213 shows a compositional bias: low complexity; sequence NNNNNNNNNGNNKNN. Residues 240–322 constitute a DNA-binding region (OB); sequence QTIKVRITKK…NKGDHTVTVN (83 aa). Residues 530-549 form a C4-type zinc finger; that stretch reads CFSCKKKIARNNEVWTCINC.

It belongs to the replication factor A protein 1 family. Component of the replication protein A complex (RPA), a heterotrimeric complex composed of RPA1, RPA2/TEB2 and RPA3/TEB3.

Its function is as follows. As part of the heterotrimeric replication protein A (RPA) complex, binds and stabilizes single-stranded DNA intermediates, that form during DNA replication or upon DNA stress. It prevents their reannealing and in parallel, recruits and activates different proteins and complexes involved in DNA metabolism. Thereby, it plays an essential role both in DNA replication and the cellular response to DNA damage. In the cellular response to DNA damage, the RPA complex controls DNA repair and DNA damage checkpoint activation. The chain is Replication protein A 70 kDa DNA-binding subunit from Tetrahymena thermophila (strain SB210).